A 172-amino-acid chain; its full sequence is Antibacterial protein PR-39 (172 aa).

An N-terminal signal peptide occupies residues 1–29 (METQRASLCLGRWSLWLLLLGLVVPSASA). Gln-30 is subject to Pyrrolidone carboxylic acid. Residues 30–130 (QALSYREAVL…DISCNEIQSV (101 aa)) constitute a propeptide that is removed on maturation. The interval 61–80 (DQPPKADEDPGTPKPVSFTV) is disordered. 2 cysteine pairs are disulfide-bonded: Cys-85–Cys-96 and Cys-107–Cys-124. A disordered region spans residues 130-172 (VRRRPRPPYLPRPRPPPFFPPRLPPRIPPGFPPRFPPRFPGKR). A compositionally biased stretch (pro residues) spans 136 to 172 (PPYLPRPRPPPFFPPRLPPRIPPGFPPRFPPRFPGKR). Pro-169 carries the post-translational modification Proline amide.

It belongs to the cathelicidin family. Small intestine and bone marrow.

The protein resides in the secreted. Its function is as follows. Exerts a potent antimicrobial activity against both E.coli and B.megaterium. This chain is Antibacterial protein PR-39 (PR39), found in Sus scrofa (Pig).